Here is a 564-residue protein sequence, read N- to C-terminus: MEVTLKEFRELCTSISTESSYVKKTKLISEFIHRGRDYNDVYIITKLLLPGTGKLIYNINDKQLVKLFSKIFCHDADEMYKYVINIGDVAYVIGSFLKKSKSVVDYATESTLTLHEVDCFLTRLSTVTRENDQIKEIKKIIPRCTPNDLRHIIRLIKHDLRMNIGPKHVLSGLHKDAYGIFKLCNNLEQVVQRSLEDNIKPLIELMVPLQPMLASACKTFSEAVKKCPNGIIVEFKYDGERIQIHKHDKNFKYFSRSLKPITPHKVTDFEELLDRAFPSAKNMILDGEIILIDTETNQPLPFGTLGINKKSMYHNACVCIFIFDCLYFNDTVLIDKPLIERRNIIHANIKEIPNRILLSEVKNISTDEELSKLLHIVLSKNIEGFVLKDAKGVYEPGMRRWLKIKKDYLDGCVMADKADLVVLGAYYGKGNKSGILSSFLMGCYDTKSEKWCTVTKCSGGHTDLELQEINDNLSVVPFDRNAIPDWLSINKIHYPDVIISDISLAPVWEIIGSEFTRSSTHTASNISIRFPRCSRIREDKTYETANNLNDIKQLYAVSISPPEE.

Residue Glu-234 coordinates ATP. Lys-236 functions as the N6-AMP-lysine intermediate in the catalytic mechanism. Positions 241, 256, 288, and 323 each coordinate ATP. Residue Glu-288 coordinates a divalent metal cation. Glu-383 contacts a divalent metal cation. Positions 399 and 403 each coordinate ATP.

Belongs to the ATP-dependent DNA ligase family. The cofactor is a divalent metal cation.

It carries out the reaction ATP + (deoxyribonucleotide)n-3'-hydroxyl + 5'-phospho-(deoxyribonucleotide)m = (deoxyribonucleotide)n+m + AMP + diphosphate.. Its function is as follows. DNA ligase that seals nicks in double-stranded DNA during DNA replication, DNA recombination and DNA repair. It is not essential for viral replication and recombination. In Vertebrata (FPV), this protein is DNA ligase (LIG).